A 159-amino-acid polypeptide reads, in one-letter code: 2-C-methyl-D-erythritol 2,4-cyclodiphosphate synthase (159 aa).

2 residues coordinate a divalent metal cation: aspartate 10 and histidine 12. Residues 10–12 (DVH) and 37–38 (HS) contribute to the 4-CDP-2-C-methyl-D-erythritol 2-phosphate site. An a divalent metal cation-binding site is contributed by histidine 45. Residues 59–61 (DIG), 64–68 (FLDTD), 103–109 (AQAPKML), 135–138 (TTTE), phenylalanine 142, and arginine 145 contribute to the 4-CDP-2-C-methyl-D-erythritol 2-phosphate site.

It belongs to the IspF family. Homotrimer. A divalent metal cation is required as a cofactor.

The catalysed reaction is 4-CDP-2-C-methyl-D-erythritol 2-phosphate = 2-C-methyl-D-erythritol 2,4-cyclic diphosphate + CMP. It participates in isoprenoid biosynthesis; isopentenyl diphosphate biosynthesis via DXP pathway; isopentenyl diphosphate from 1-deoxy-D-xylulose 5-phosphate: step 4/6. Functionally, involved in the biosynthesis of isopentenyl diphosphate (IPP) and dimethylallyl diphosphate (DMAPP), two major building blocks of isoprenoid compounds. Catalyzes the conversion of 4-diphosphocytidyl-2-C-methyl-D-erythritol 2-phosphate (CDP-ME2P) to 2-C-methyl-D-erythritol 2,4-cyclodiphosphate (ME-CPP) with a corresponding release of cytidine 5-monophosphate (CMP). The polypeptide is 2-C-methyl-D-erythritol 2,4-cyclodiphosphate synthase (Francisella tularensis subsp. holarctica (strain OSU18)).